We begin with the raw amino-acid sequence, 426 residues long: Proline--tRNA ligase (426 aa).

It belongs to the class-II aminoacyl-tRNA synthetase family. ProS type 2 subfamily. Homodimer.

It localises to the cytoplasm. It catalyses the reaction tRNA(Pro) + L-proline + ATP = L-prolyl-tRNA(Pro) + AMP + diphosphate. Functionally, catalyzes the attachment of proline to tRNA(Pro) in a two-step reaction: proline is first activated by ATP to form Pro-AMP and then transferred to the acceptor end of tRNA(Pro). The chain is Proline--tRNA ligase from Rickettsia africae (strain ESF-5).